The following is a 248-amino-acid chain: MYKLVLVRHGESEWNKENLFTGWTDVKLSDKGIDEAVEAGLLLKQEGYSFDIAFSSLLSRANDTLNIILRELGQSYISVKKTWRLNERHYGALQGLNKSETAAKYGEDKVLIWRRSYDVPPMSLDESDDRHPIKDPRYKHIPKRELPSTECLKDTVARVIPYWTDEIAKEVLEGKKVIVAAHGNSLRALVKYFDNLSEEDVLKLNIPTGIPLVYELDKDLNPIKHYYLGDESKIKKAMESVASQGKLK.

Substrate is bound by residues 8 to 15 (RHGESEWN), 21 to 22 (TG), Arg60, 87 to 90 (ERHY), Lys98, 114 to 115 (RR), and 183 to 184 (GN). His9 functions as the Tele-phosphohistidine intermediate in the catalytic mechanism. The active-site Proton donor/acceptor is Glu87.

Belongs to the phosphoglycerate mutase family. BPG-dependent PGAM subfamily.

It catalyses the reaction (2R)-2-phosphoglycerate = (2R)-3-phosphoglycerate. The protein operates within carbohydrate degradation; glycolysis; pyruvate from D-glyceraldehyde 3-phosphate: step 3/5. Its function is as follows. Catalyzes the interconversion of 2-phosphoglycerate and 3-phosphoglycerate. The protein is 2,3-bisphosphoglycerate-dependent phosphoglycerate mutase of Borreliella burgdorferi (strain ATCC 35210 / DSM 4680 / CIP 102532 / B31) (Borrelia burgdorferi).